The sequence spans 116 residues: MYFTLLVVVILTAIALVAVALGIARAISPRSYNSQKGEAYECGIPTRGRSWMQFKVGYYLFAILFLMFDVETVFLFPWAVVVQDLGVYGLFSILFFLVILVLGLAYAWKKGALEWK.

Helical transmembrane passes span 3 to 23 (FTLL…ALGI), 61 to 81 (FAIL…WAVV), and 85 to 105 (LGVY…LGLA).

Belongs to the complex I subunit 3 family. NDH-1 is composed of 14 different subunits. Subunits NuoA, H, J, K, L, M, N constitute the membrane sector of the complex.

It is found in the cell inner membrane. The enzyme catalyses a quinone + NADH + 5 H(+)(in) = a quinol + NAD(+) + 4 H(+)(out). Its function is as follows. NDH-1 shuttles electrons from NADH, via FMN and iron-sulfur (Fe-S) centers, to quinones in the respiratory chain. The immediate electron acceptor for the enzyme in this species is believed to be a menaquinone. Couples the redox reaction to proton translocation (for every two electrons transferred, four hydrogen ions are translocated across the cytoplasmic membrane), and thus conserves the redox energy in a proton gradient. This chain is NADH-quinone oxidoreductase subunit A, found in Phocaeicola vulgatus (strain ATCC 8482 / DSM 1447 / JCM 5826 / CCUG 4940 / NBRC 14291 / NCTC 11154) (Bacteroides vulgatus).